A 169-amino-acid chain; its full sequence is uncharacterized protein (169 aa).

A run of 2 helical transmembrane segments spans residues 10 to 30 (NVHMYDVAIILILIIVVFKLI) and 149 to 169 (IPLAFVQMIAISIALICLLIP).

The protein resides in the membrane. This is an uncharacterized protein from Dictyostelium discoideum (Social amoeba).